The primary structure comprises 295 residues: Light-independent protochlorophyllide reductase iron-sulfur ATP-binding protein (295 aa).

Residues 39–44 and lysine 68 each bind ATP; that span reads GIGKST. Position 43 (serine 43) interacts with Mg(2+). [4Fe-4S] cluster is bound by residues cysteine 124 and cysteine 158. Residue 209–210 coordinates ATP; the sequence is NR.

This sequence belongs to the NifH/BchL/ChlL family. In terms of assembly, homodimer. Protochlorophyllide reductase is composed of three subunits; ChlL, ChlN and ChlB. [4Fe-4S] cluster is required as a cofactor.

The catalysed reaction is chlorophyllide a + oxidized 2[4Fe-4S]-[ferredoxin] + 2 ADP + 2 phosphate = protochlorophyllide a + reduced 2[4Fe-4S]-[ferredoxin] + 2 ATP + 2 H2O. It functions in the pathway porphyrin-containing compound metabolism; chlorophyll biosynthesis (light-independent). Its function is as follows. Component of the dark-operative protochlorophyllide reductase (DPOR) that uses Mg-ATP and reduced ferredoxin to reduce ring D of protochlorophyllide (Pchlide) to form chlorophyllide a (Chlide). This reaction is light-independent. The L component serves as a unique electron donor to the NB-component of the complex, and binds Mg-ATP. The chain is Light-independent protochlorophyllide reductase iron-sulfur ATP-binding protein from Prochlorococcus marinus (strain MIT 9301).